The chain runs to 623 residues: Peptidoglycan D,D-transpeptidase MrdA (623 aa).

The helical transmembrane segment at 17 to 37 (VIVAFGVVVVCFGILIFNLYN) threads the bilayer. Residue Ser326 is the Acyl-ester intermediate of the active site.

It belongs to the transpeptidase family. MrdA subfamily.

The protein localises to the cell inner membrane. The enzyme catalyses Preferential cleavage: (Ac)2-L-Lys-D-Ala-|-D-Ala. Also transpeptidation of peptidyl-alanyl moieties that are N-acyl substituents of D-alanine.. Its pathway is cell wall biogenesis; peptidoglycan biosynthesis. Catalyzes cross-linking of the peptidoglycan cell wall. The sequence is that of Peptidoglycan D,D-transpeptidase MrdA from Salmonella typhimurium (strain SL1344).